The primary structure comprises 209 residues: Large ribosomal subunit protein bL25 (209 aa).

It belongs to the bacterial ribosomal protein bL25 family. CTC subfamily. In terms of assembly, part of the 50S ribosomal subunit; part of the 5S rRNA/L5/L18/L25 subcomplex. Contacts the 5S rRNA. Binds to the 5S rRNA independently of L5 and L18.

Functionally, this is one of the proteins that binds to the 5S RNA in the ribosome where it forms part of the central protuberance. This Xanthomonas campestris pv. campestris (strain 8004) protein is Large ribosomal subunit protein bL25.